The primary structure comprises 77 residues: Translation initiation factor IF-1, chloroplastic (77 aa).

The S1-like domain occupies 1 to 72; that stretch reads MKKQNLIEME…TKGRITYRLR (72 aa).

Belongs to the IF-1 family. As to quaternary structure, component of the 30S ribosomal translation pre-initiation complex which assembles on the 30S ribosome in the order IF-2 and IF-3, IF-1 and N-formylmethionyl-tRNA(fMet); mRNA recruitment can occur at any time during PIC assembly.

The protein resides in the plastid. Its subcellular location is the chloroplast. Functionally, one of the essential components for the initiation of protein synthesis. Stabilizes the binding of IF-2 and IF-3 on the 30S subunit to which N-formylmethionyl-tRNA(fMet) subsequently binds. Helps modulate mRNA selection, yielding the 30S pre-initiation complex (PIC). Upon addition of the 50S ribosomal subunit IF-1, IF-2 and IF-3 are released leaving the mature 70S translation initiation complex. This chain is Translation initiation factor IF-1, chloroplastic, found in Zygnema circumcarinatum (Green alga).